A 733-amino-acid polypeptide reads, in one-letter code: Methionine--tRNA ligase (733 aa).

Residues 11 to 21 (PYANGPIHAGH) carry the 'HIGH' region motif. 4 residues coordinate Zn(2+): C143, C146, C156, and C159. The short motif at 345-349 (KFSTS) is the 'KMSKS' region element. Residue T348 participates in ATP binding. Residues 633 to 733 (DFMKLDLRVG…KEVKLGARIR (101 aa)) form the tRNA-binding domain.

This sequence belongs to the class-I aminoacyl-tRNA synthetase family. MetG type 1 subfamily. As to quaternary structure, homodimer. Zn(2+) is required as a cofactor.

The protein localises to the cytoplasm. The catalysed reaction is tRNA(Met) + L-methionine + ATP = L-methionyl-tRNA(Met) + AMP + diphosphate. Its function is as follows. Is required not only for elongation of protein synthesis but also for the initiation of all mRNA translation through initiator tRNA(fMet) aminoacylation. This Thermococcus onnurineus (strain NA1) protein is Methionine--tRNA ligase.